The following is a 513-amino-acid chain: ATP synthase subunit alpha (513 aa).

169–176 (GDRQTGKT) is an ATP binding site.

This sequence belongs to the ATPase alpha/beta chains family. F-type ATPases have 2 components, CF(1) - the catalytic core - and CF(0) - the membrane proton channel. CF(1) has five subunits: alpha(3), beta(3), gamma(1), delta(1), epsilon(1). CF(0) has three main subunits: a(1), b(2) and c(9-12). The alpha and beta chains form an alternating ring which encloses part of the gamma chain. CF(1) is attached to CF(0) by a central stalk formed by the gamma and epsilon chains, while a peripheral stalk is formed by the delta and b chains.

It is found in the cell inner membrane. The enzyme catalyses ATP + H2O + 4 H(+)(in) = ADP + phosphate + 5 H(+)(out). Functionally, produces ATP from ADP in the presence of a proton gradient across the membrane. The alpha chain is a regulatory subunit. The protein is ATP synthase subunit alpha of Thioalkalivibrio sulfidiphilus (strain HL-EbGR7).